A 347-amino-acid chain; its full sequence is Heat-inducible transcription repressor HrcA (347 aa).

Belongs to the HrcA family.

Its function is as follows. Negative regulator of class I heat shock genes (grpE-dnaK-dnaJ and groELS operons). Prevents heat-shock induction of these operons. The protein is Heat-inducible transcription repressor HrcA of Rhodococcus erythropolis (strain PR4 / NBRC 100887).